Consider the following 288-residue polypeptide: Co-chaperone protein DjlA (288 aa).

Over 1–6 the chain is Periplasmic; sequence MEFIGK. The chain crosses the membrane as a helical span at residues 7-30; it reads IIGVFLGWKVGGFFGAIAGLILGS. At 31–288 the chain is on the cytoplasmic side; it reads IADKKLYELG…DLICKAKGWK (258 aa). Residues 222–288 enclose the J domain; it reads DAYKVLGVTE…DLICKAKGWK (67 aa).

As to quaternary structure, homodimer.

The protein resides in the cell inner membrane. Functionally, regulatory DnaK co-chaperone. Direct interaction between DnaK and DjlA is needed for the induction of the wcaABCDE operon, involved in the synthesis of a colanic acid polysaccharide capsule, possibly through activation of the RcsB/RcsC phosphotransfer signaling pathway. The colanic acid capsule may help the bacterium survive conditions outside the host. The protein is Co-chaperone protein DjlA of Haemophilus influenzae (strain ATCC 51907 / DSM 11121 / KW20 / Rd).